We begin with the raw amino-acid sequence, 224 residues long: Golgi to ER traffic protein 1 (224 aa).

Residues 1-33 (MDEAIIVDAEFVAPVGTTAGEFVPIDRAPAAGL) are Lumenal-facing. Residues 34-53 (LLLVAFVVLYAKVISKLGKP) form a helical membrane-spanning segment. Residues 54-137 (AIQEFLWEII…RFFTIISSAI (84 aa)) lie on the Cytoplasmic side of the membrane. Residues 102-124 (AKLDREYGKLKVEIEDINNLLTA) are a coiled coil. A helical transmembrane segment spans residues 138–158 (FLSTTGMKMFLRIKHRKAAIF). Residues 159 to 182 (WLPKNAFPYPIEYILSFSSAPLGS) lie on the Lumenal side of the membrane. A helical transmembrane segment spans residues 183–199 (VSVSAWLMICDAAMDLI). Topologically, residues 200-224 (VTIFVALVVGVIGMLRSNKVKPKTA) are cytoplasmic.

Belongs to the WRB/GET1 family. Component of the Golgi to ER traffic (GET) complex, which is composed of GET1, GET2 and GET3. Within the complex, GET1 and GET2 form a heterotetramer which is stabilized by phosphatidylinositol binding and which binds to the GET3 homodimer.

The protein localises to the endoplasmic reticulum membrane. It is found in the golgi apparatus membrane. Functionally, required for the post-translational delivery of tail-anchored (TA) proteins to the endoplasmic reticulum. Together with GET2, acts as a membrane receptor for soluble GET3, which recognizes and selectively binds the transmembrane domain of TA proteins in the cytosol. The GET complex cooperates with the HDEL receptor ERD2 to mediate the ATP-dependent retrieval of resident ER proteins that contain a C-terminal H-D-E-L retention signal from the Golgi to the ER. The protein is Golgi to ER traffic protein 1 of Yarrowia lipolytica (strain CLIB 122 / E 150) (Yeast).